A 322-amino-acid chain; its full sequence is MSQLYDITIVGGGPVGLFAAFYAHLRQAKVQIIDSLPQLGGQPAILYPEKEILDVPGFPNLTGEELTNRLIEQLNGFDTPIHLNETVLEIDKQEEEFAITTSKGSHLTKTVIIAMGGGAFKPRPLELEGVEGYENIHYHVSNIQQYAGKKVTILGGGDSAVDWALAFEKIAPTTLVHRRDNFRALEHSVQALQESSVTIKTPFAPSQLLGNGKTLAKLEITKVKSDETETIDLDHLFVNYGFKSSVGNLKNWGLDLNRHKIIVNSKQESSQAGIYAIGDCCYYDGKIDLIATGLGEAPTAVNNAINYIDPEQKVQPKHSTSL.

Residues Asp-34, Gln-42, Tyr-47, Val-87, Phe-120, Asp-279, and Thr-320 each coordinate FAD.

The protein belongs to the ferredoxin--NADP reductase type 2 family. As to quaternary structure, homodimer. FAD is required as a cofactor.

The catalysed reaction is 2 reduced [2Fe-2S]-[ferredoxin] + NADP(+) + H(+) = 2 oxidized [2Fe-2S]-[ferredoxin] + NADPH. The sequence is that of Ferredoxin--NADP reductase from Streptococcus pneumoniae (strain Hungary19A-6).